Here is a 336-residue protein sequence, read N- to C-terminus: Dihydroorotate dehydrogenase (quinone) (336 aa).

FMN-binding positions include 62-66 (AGLDK) and Thr86. Lys66 is a substrate binding site. 111–115 (NRMGF) serves as a coordination point for substrate. FMN contacts are provided by Asn139 and Asn172. Residue Asn172 participates in substrate binding. The Nucleophile role is filled by Ser175. Substrate is bound at residue Asn177. Residues Lys217 and Thr245 each contribute to the FMN site. 246 to 247 (NT) is a substrate binding site. Residues Gly268, Gly297, and 318–319 (YS) each bind FMN.

Belongs to the dihydroorotate dehydrogenase family. Type 2 subfamily. As to quaternary structure, monomer. FMN serves as cofactor.

It is found in the cell membrane. It catalyses the reaction (S)-dihydroorotate + a quinone = orotate + a quinol. Its pathway is pyrimidine metabolism; UMP biosynthesis via de novo pathway; orotate from (S)-dihydroorotate (quinone route): step 1/1. Catalyzes the conversion of dihydroorotate to orotate with quinone as electron acceptor. The polypeptide is Dihydroorotate dehydrogenase (quinone) (Aliivibrio fischeri (strain MJ11) (Vibrio fischeri)).